The sequence spans 1206 residues: MIDVNNFEYMKIGLASPNKIRSWSRGEVKKPETINYRTLKPEKDGLFCERIFGPQKDWECHCGKYKRVRYKGVVCDRCGVEVTRAKVRRERMGHIELAAPVSHIWYFKGIPSRMGLVLDMSPRSLEEVIYFASYVVTDPGDTPLEKKQLLSEKEFRAYLDKYGRSFTAQMGAEAIRKLLMDIDLDKEVDGLKEELQTAQGQRRTRAIKRLEVLEAFRNSGNEPSWMILDVLPVIPPELRPMVQLDGGRFATSDLNDLYRRVINRNNRLKRLLDLGAPSIIVQNEKRMLQEAVDALIDNGRRGRPVTGPGNRPLKSLSHMLKGKQGRFRQNLLGKRVDYSGRSVIVVGPNLKMYQCGLPKEMALELFKPFVMKELVSKGLAHNIKSAKRKVERVQPEVWDVLEEVIKEHPVLLNRAPTLHRLGIQAFEPTLVEGRAIKLHPLVCTAYNADFDGDQMAVHVPLSAEAQAEARILMLAAQNILNPKDGKPVVTPSQDMVLGNYYLTMEREGAKGEGSVFKDTNEALIAYQNGYVHLHTRIAIPVASLGKTTFKEEQNSQLLLTTVGKLIFNEILPESFPYVNEPTAHNLEVETPSKYMVPTSTNVKELFQERDVVAPFKKGFLGNIIAEVFKKFKITETSKMLDRMKDLGFKYSTKAGITVGVADIVVLPEKKEILAEAEKKVDRVLKQFRRGLITEEERYDRVISIWSEAKDVIQDKLMGSLDKRNPIFMMSDSGARGNASNFTQLAGMRGLMANPSGRIIELPIKSSFREGLTVLEYFISTHGARKGLADTALKTADSGYLTRRLVDVAQDVIVREDDCGTDRGLEVEAIKEGNEIIEGLYDRLVGRVAFKTVRHPETGEPIVKKNELIHEDLAKQIVEAGVEQVTIRSVFTCDTRHGVCKKCYGRNLATGSDVEVGEAVGIIAAQSIGEPGTQLTMRTFHTGGVAGDDITQGLPRIQELFEARNPKGQAVITEIEGEVTNINEADKREITVKGEMETKTYSIPYGARIKVELGEQVVPGQSLTEGSIDPKELLKVQGMTGVQEYLLREVQKVYRMQGVEIGDKHVEVMVRQMLRKIRVIDAGDTEVLPGSLIEIQHFNDENKKVLLSGKRPATGRPVLLGITKASLETDSFLSAASFQETTRVLTDAAIKGKRDELVGLKENVIIGKLVPAGTGMNRYRNLDIVSDYDQQAVGTEEAVMEEAVTTE.

Residues Cys60, Cys62, Cys75, and Cys78 each coordinate Zn(2+). Mg(2+)-binding residues include Asp449, Asp451, and Asp453. Cys818, Cys892, Cys899, and Cys902 together coordinate Zn(2+).

It belongs to the RNA polymerase beta' chain family. In terms of assembly, the RNAP catalytic core consists of 2 alpha, 1 beta, 1 beta' and 1 omega subunit. When a sigma factor is associated with the core the holoenzyme is formed, which can initiate transcription. Mg(2+) is required as a cofactor. It depends on Zn(2+) as a cofactor.

The catalysed reaction is RNA(n) + a ribonucleoside 5'-triphosphate = RNA(n+1) + diphosphate. DNA-dependent RNA polymerase catalyzes the transcription of DNA into RNA using the four ribonucleoside triphosphates as substrates. In Halalkalibacterium halodurans (strain ATCC BAA-125 / DSM 18197 / FERM 7344 / JCM 9153 / C-125) (Bacillus halodurans), this protein is DNA-directed RNA polymerase subunit beta'.